The following is a 413-amino-acid chain: Peptidase T (413 aa).

Position 82 (His82) interacts with Zn(2+). Asp84 is a catalytic residue. Asp145 contributes to the Zn(2+) binding site. The active-site Proton acceptor is the Glu179. Zn(2+) is bound by residues Glu180, Asp202, and His384.

Belongs to the peptidase M20B family. Zn(2+) serves as cofactor.

The protein localises to the cytoplasm. The catalysed reaction is Release of the N-terminal residue from a tripeptide.. Its function is as follows. Cleaves the N-terminal amino acid of tripeptides. The protein is Peptidase T of Latilactobacillus sakei subsp. sakei (strain 23K) (Lactobacillus sakei subsp. sakei).